Reading from the N-terminus, the 392-residue chain is GTPase Obg (392 aa).

In terms of domain architecture, Obg spans 1–159; that stretch reads MKFIDEALIR…RDLQLELMLL (159 aa). The OBG-type G domain maps to 160–333; sequence ADVGMLGLPN…LCRDIMDFIE (174 aa). Residues 166–173, 191–195, 213–216, 283–286, and 314–316 contribute to the GTP site; these read GLPNAGKS, FTTLV, DIPG, NKID, and SAA. The Mg(2+) site is built by Ser173 and Thr193. Residues 361-392 are disordered; sequence SEQVFTEDDQEEDDWDDWSEDDEEGVEIIYKP. Residues 365–386 show a composition bias toward acidic residues; the sequence is FTEDDQEEDDWDDWSEDDEEGV.

The protein belongs to the TRAFAC class OBG-HflX-like GTPase superfamily. OBG GTPase family. In terms of assembly, monomer. Mg(2+) serves as cofactor.

It is found in the cytoplasm. Its function is as follows. An essential GTPase which binds GTP, GDP and possibly (p)ppGpp with moderate affinity, with high nucleotide exchange rates and a fairly low GTP hydrolysis rate. Plays a role in control of the cell cycle, stress response, ribosome biogenesis and in those bacteria that undergo differentiation, in morphogenesis control. The protein is GTPase Obg of Histophilus somni (strain 2336) (Haemophilus somnus).